The chain runs to 253 residues: 5'/3'-nucleotidase SurE (253 aa).

4 residues coordinate a divalent metal cation: Asp8, Asp9, Ser39, and Asn92.

It belongs to the SurE nucleotidase family. A divalent metal cation serves as cofactor.

The protein resides in the cytoplasm. The enzyme catalyses a ribonucleoside 5'-phosphate + H2O = a ribonucleoside + phosphate. The catalysed reaction is a ribonucleoside 3'-phosphate + H2O = a ribonucleoside + phosphate. It carries out the reaction [phosphate](n) + H2O = [phosphate](n-1) + phosphate + H(+). Its function is as follows. Nucleotidase with a broad substrate specificity as it can dephosphorylate various ribo- and deoxyribonucleoside 5'-monophosphates and ribonucleoside 3'-monophosphates with highest affinity to 3'-AMP. Also hydrolyzes polyphosphate (exopolyphosphatase activity) with the preference for short-chain-length substrates (P20-25). Might be involved in the regulation of dNTP and NTP pools, and in the turnover of 3'-mononucleotides produced by numerous intracellular RNases (T1, T2, and F) during the degradation of various RNAs. The protein is 5'/3'-nucleotidase SurE of Shigella boydii serotype 18 (strain CDC 3083-94 / BS512).